A 637-amino-acid chain; its full sequence is MNDWSIDDARAGYNVTHWSQGFYGISDHGEVTVSPDPKNPDYKIGLNELAKDMVKAGVALPVLVRFPQILHHRVNSLCQAFDQAIQKYEYQADYLLVYPIKVNQQQTVVEEILASQASKEVPQLGLEAGSKPELMAVLAMAQKASSVIVCNGYKDNEYIRLALIGEKLGHKVYIVLEKLSELKMVLAESKRLGVTPRLGLRARLAFQGKGKWQASGGEKSKFGLSAAQILLVVEQLKQNDMLDSLQLLHFHLGSQIANIRDIRQGVSEAGRFYCELRALGASVNCFDVGGGLAVDYDGTRSQSNNSMNYGLTEYANNIVNVLTDICNEYEQPMPRIISESGRYLTAHHAVLITDVIGTEAYQPEDIQPPAEESPQLLHNMWHSWSELSGRADQRALIEIYHDSQSDLQEAHSLFALGQLSLAERAWAEQANLRVCHEVQGLLSAKNRYHRPIIDELNEKLADKFFVNFSLFQSLPDAWGIDQVFPVLPLSGLDKAPERRAVMLDITCDSDGIVDQYVDGQGIETTLPVPAWSADSPYLIGFFLVGAYQEILGDMHNLFGDTNSAVVRIEDNGVTNIESVLAGDTVADVLRYVNLDAVAFMRTYEELVNLHIAKDERAQILEELQVGLKGYTYLEDFS.

N6-(pyridoxal phosphate)lysine is present on Lys101. Residue 286 to 296 (FDVGGGLAVDY) coordinates substrate.

Belongs to the Orn/Lys/Arg decarboxylase class-II family. SpeA subfamily. It depends on Mg(2+) as a cofactor. Pyridoxal 5'-phosphate serves as cofactor.

It carries out the reaction L-arginine + H(+) = agmatine + CO2. It functions in the pathway amine and polyamine biosynthesis; agmatine biosynthesis; agmatine from L-arginine: step 1/1. Catalyzes the biosynthesis of agmatine from arginine. The polypeptide is Biosynthetic arginine decarboxylase (Shewanella baltica (strain OS195)).